Reading from the N-terminus, the 216-residue chain is Probable GTP-binding protein EngB (216 aa).

One can recognise an EngB-type G domain in the interval 27–201; it reads EGIEVAFAGR…REKLDTWFSE (175 aa). GTP is bound by residues 35-42, 62-66, 80-83, 147-150, and 180-182; these read GRSNAGKS, GRTQL, DLPG, TKAD, and FSS. Residues S42 and T64 each contribute to the Mg(2+) site.

It belongs to the TRAFAC class TrmE-Era-EngA-EngB-Septin-like GTPase superfamily. EngB GTPase family. Requires Mg(2+) as cofactor.

Necessary for normal cell division and for the maintenance of normal septation. This is Probable GTP-binding protein EngB from Yersinia pestis bv. Antiqua (strain Angola).